The chain runs to 513 residues: Maturase K (513 aa).

The protein belongs to the intron maturase 2 family. MatK subfamily.

The protein resides in the plastid. The protein localises to the chloroplast. Usually encoded in the trnK tRNA gene intron. Probably assists in splicing its own and other chloroplast group II introns. In Pinus parviflora (Japanese white pine), this protein is Maturase K.